A 104-amino-acid polypeptide reads, in one-letter code: Urease subunit beta (104 aa).

The protein belongs to the urease beta subunit family. As to quaternary structure, heterotrimer of UreA (gamma), UreB (beta) and UreC (alpha) subunits. Three heterotrimers associate to form the active enzyme.

The protein resides in the cytoplasm. It carries out the reaction urea + 2 H2O + H(+) = hydrogencarbonate + 2 NH4(+). The protein operates within nitrogen metabolism; urea degradation; CO(2) and NH(3) from urea (urease route): step 1/1. The polypeptide is Urease subunit beta (Methylocella silvestris (strain DSM 15510 / CIP 108128 / LMG 27833 / NCIMB 13906 / BL2)).